The chain runs to 734 residues: Serine protease FAM111B (734 aa).

N-acetylmethionine is present on M1. Composition is skewed to basic and acidic residues over residues 1–10 (MNSMKTEENK) and 17–32 (DDQRTRPEVSKDTVMK). The interval 1–32 (MNSMKTEENKSFSAMEDDQRTRPEVSKDTVMK) is disordered. A Glycyl lysine isopeptide (Lys-Gly) (interchain with G-Cter in SUMO2) cross-link involves residue K284. Residues 285–321 (QNESATDEINHQSLIQSKKKVHKPKKDGETKDVEHSR) form a disordered region. Positions 310–321 (KDGETKDVEHSR) are enriched in basic and acidic residues. Residues H490, D544, and S650 each act as charge relay system in the active site. Residues 712–734 (TYDEEKGKQESSLQDHQIEPMEC) form a disordered region.

It belongs to the FAM111 family. In terms of tissue distribution, widely expressed.

Serine protease. This chain is Serine protease FAM111B, found in Homo sapiens (Human).